We begin with the raw amino-acid sequence, 425 residues long: UDP-N-acetylglucosamine 1-carboxyvinyltransferase (425 aa).

22-23 (KN) lines the phosphoenolpyruvate pocket. Residue R93 participates in UDP-N-acetyl-alpha-D-glucosamine binding. The active-site Proton donor is the C117. C117 is subject to 2-(S-cysteinyl)pyruvic acid O-phosphothioketal. UDP-N-acetyl-alpha-D-glucosamine-binding positions include 122-126 (RPVDL), 162-165 (KVSV), D307, and I329.

The protein belongs to the EPSP synthase family. MurA subfamily.

The protein localises to the cytoplasm. The enzyme catalyses phosphoenolpyruvate + UDP-N-acetyl-alpha-D-glucosamine = UDP-N-acetyl-3-O-(1-carboxyvinyl)-alpha-D-glucosamine + phosphate. Its pathway is cell wall biogenesis; peptidoglycan biosynthesis. Cell wall formation. Adds enolpyruvyl to UDP-N-acetylglucosamine. The protein is UDP-N-acetylglucosamine 1-carboxyvinyltransferase of Pasteurella multocida (strain Pm70).